The sequence spans 608 residues: Albumin (608 aa).

The first 18 residues, 1–18 (MKWVTFLLLLFVSDSAFS), serve as a signal peptide directing secretion. A propeptide spanning residues 19–24 (RGLFRR) is cleaved from the precursor. 3 Albumin domains span residues 19 to 211 (RGLF…ALKE), 212 to 403 (KALA…EFQP), and 404 to 601 (LVEE…KLVA). Histidine 27 serves as a coordination point for Cu cation. Serine 29 carries the post-translational modification Phosphoserine. Ca(2+)-binding residues include glutamate 30 and aspartate 37. Cysteine 77 and cysteine 86 form a disulfide bridge. Residues serine 82 and serine 89 each carry the phosphoserine modification. Histidine 91 contributes to the Zn(2+) binding site. 6 cysteine pairs are disulfide-bonded: cysteine 99-cysteine 115, cysteine 114-cysteine 125, cysteine 148-cysteine 193, cysteine 192-cysteine 201, cysteine 224-cysteine 270, and cysteine 269-cysteine 277. Glutamate 268 is a binding site for Ca(2+). The Zn(2+) site is built by histidine 271 and aspartate 273. Residues aspartate 273, glutamate 276, and aspartate 279 each coordinate Ca(2+). Cystine bridges form between cysteine 289-cysteine 303, cysteine 302-cysteine 313, cysteine 340-cysteine 385, cysteine 384-cysteine 393, cysteine 416-cysteine 462, cysteine 461-cysteine 472, cysteine 485-cysteine 501, and cysteine 500-cysteine 511. Serine 297 is modified (phosphoserine). Position 443 is a phosphoserine (serine 443). Phosphothreonine is present on residues threonine 444 and threonine 446. Lysine 460 carries the post-translational modification N6-succinyllysine. Serine 513 carries the phosphoserine modification. 2 disulfides stabilise this stretch: cysteine 538–cysteine 583 and cysteine 582–cysteine 591. At lysine 543 the chain carries N6-succinyllysine. The residue at position 558 (lysine 558) is an N6-methyllysine. The residue at position 570 (threonine 570) is a Phosphothreonine. N6-succinyllysine is present on lysine 588.

Belongs to the ALB/AFP/VDB family. In terms of assembly, interacts with FCGRT; this interaction regulates ALB homeostasis. Interacts with TASOR. In plasma, occurs in a covalently-linked complex with chromophore-bound alpha-1-microglobulin; this interaction does not prevent fatty acid binding to ALB. As to expression, plasma.

It is found in the secreted. Binds water, Ca(2+), Na(+), K(+), fatty acids, hormones, bilirubin and drugs. Its main function is the regulation of the colloidal osmotic pressure of blood. Major zinc transporter in plasma, typically binds about 80% of all plasma zinc. Major calcium and magnesium transporter in plasma, binds approximately 45% of circulating calcium and magnesium in plasma. Potentially has more than two calcium-binding sites and might additionally bind calcium in a non-specific manner. The shared binding site between zinc and calcium at residue Asp-273 suggests a crosstalk between zinc and calcium transport in the blood. The rank order of affinity is zinc &gt; calcium &gt; magnesium. Binds to the bacterial siderophore enterobactin and inhibits enterobactin-mediated iron uptake of E.coli from ferric transferrin, and may thereby limit the utilization of iron and growth of enteric bacteria such as E.coli. Does not prevent iron uptake by the bacterial siderophore aerobactin. The chain is Albumin from Mesocricetus auratus (Golden hamster).